The chain runs to 78 residues: UPF0270 protein ECA4061 (78 aa).

It belongs to the UPF0270 family.

This chain is UPF0270 protein ECA4061, found in Pectobacterium atrosepticum (strain SCRI 1043 / ATCC BAA-672) (Erwinia carotovora subsp. atroseptica).